The chain runs to 102 residues: Small ribosomal subunit protein uS10 (102 aa).

It belongs to the universal ribosomal protein uS10 family. Part of the 30S ribosomal subunit.

Functionally, involved in the binding of tRNA to the ribosomes. The protein is Small ribosomal subunit protein uS10 of Syntrophotalea carbinolica (strain DSM 2380 / NBRC 103641 / GraBd1) (Pelobacter carbinolicus).